Consider the following 559-residue polypeptide: DNA ligase (559 aa).

Glutamate 248 contributes to the ATP binding site. The active-site N6-AMP-lysine intermediate is lysine 250. Residues arginine 255, arginine 270, glutamate 300, phenylalanine 341, arginine 417, and lysine 423 each contribute to the ATP site.

Belongs to the ATP-dependent DNA ligase family. Mg(2+) serves as cofactor.

The enzyme catalyses ATP + (deoxyribonucleotide)n-3'-hydroxyl + 5'-phospho-(deoxyribonucleotide)m = (deoxyribonucleotide)n+m + AMP + diphosphate.. Its function is as follows. DNA ligase that seals nicks in double-stranded DNA during DNA replication, DNA recombination and DNA repair. This Methanopyrus kandleri (strain AV19 / DSM 6324 / JCM 9639 / NBRC 100938) protein is DNA ligase.